A 431-amino-acid polypeptide reads, in one-letter code: Trigger factor (431 aa).

The PPIase FKBP-type domain occupies 161–246 (DDRVTIDFVG…LKKVENIVLP (86 aa)).

It belongs to the FKBP-type PPIase family. Tig subfamily.

Its subcellular location is the cytoplasm. The enzyme catalyses [protein]-peptidylproline (omega=180) = [protein]-peptidylproline (omega=0). Involved in protein export. Acts as a chaperone by maintaining the newly synthesized protein in an open conformation. Functions as a peptidyl-prolyl cis-trans isomerase. The chain is Trigger factor from Glaesserella parasuis serovar 5 (strain SH0165) (Haemophilus parasuis).